The primary structure comprises 347 residues: NADH-ubiquinone oxidoreductase chain 2 (347 aa).

The next 11 helical transmembrane spans lie at 3–23 (PPIL…VMTS), 25–45 (HWML…PILM), 59–79 (YFLT…INLL), 96–116 (ILMT…FWVP), 122–142 (ISLS…LSVL), 149–169 (INPN…GWGG), 178–198 (IMAY…LYNP), 201–221 (MFLN…LFMI), 237–257 (APLI…LPPL), 274–294 (EMII…YFYM), and 323–343 (MIFL…TPMI).

It belongs to the complex I subunit 2 family. Core subunit of respiratory chain NADH dehydrogenase (Complex I) which is composed of 45 different subunits. Interacts with TMEM242.

Its subcellular location is the mitochondrion inner membrane. The catalysed reaction is a ubiquinone + NADH + 5 H(+)(in) = a ubiquinol + NAD(+) + 4 H(+)(out). Its function is as follows. Core subunit of the mitochondrial membrane respiratory chain NADH dehydrogenase (Complex I) which catalyzes electron transfer from NADH through the respiratory chain, using ubiquinone as an electron acceptor. Essential for the catalytic activity and assembly of complex I. The sequence is that of NADH-ubiquinone oxidoreductase chain 2 from Civettictis civetta (African civet).